We begin with the raw amino-acid sequence, 166 residues long: NAD(P)H-quinone oxidoreductase subunit I, chloroplastic (166 aa).

2 4Fe-4S ferredoxin-type domains span residues 55-84 (GRIHFEFDKCIACEVCVRVCPIDLPVVDWK) and 95-124 (LNYSIDFGICIFCGNCVEYCPTNCLSMTEE). Residues C64, C67, C70, C74, C104, C107, C110, and C114 each coordinate [4Fe-4S] cluster.

The protein belongs to the complex I 23 kDa subunit family. As to quaternary structure, NDH is composed of at least 16 different subunits, 5 of which are encoded in the nucleus. [4Fe-4S] cluster serves as cofactor.

The protein localises to the plastid. The protein resides in the chloroplast thylakoid membrane. The enzyme catalyses a plastoquinone + NADH + (n+1) H(+)(in) = a plastoquinol + NAD(+) + n H(+)(out). It catalyses the reaction a plastoquinone + NADPH + (n+1) H(+)(in) = a plastoquinol + NADP(+) + n H(+)(out). In terms of biological role, NDH shuttles electrons from NAD(P)H:plastoquinone, via FMN and iron-sulfur (Fe-S) centers, to quinones in the photosynthetic chain and possibly in a chloroplast respiratory chain. The immediate electron acceptor for the enzyme in this species is believed to be plastoquinone. Couples the redox reaction to proton translocation, and thus conserves the redox energy in a proton gradient. This Rensonia salvadorica protein is NAD(P)H-quinone oxidoreductase subunit I, chloroplastic.